The sequence spans 636 residues: Chaperone protein HtpG (636 aa).

The interval 1-345 (MSESATANAN…SSDLPLNVSR (345 aa)) is a; substrate-binding. Residues 346 to 562 (EILQQSKDID…EHDPSGNLAR (217 aa)) form a b region. The tract at residues 563–636 (LMKAAGQPMP…NDLMMALSAK (74 aa)) is c.

It belongs to the heat shock protein 90 family. As to quaternary structure, homodimer.

It is found in the cytoplasm. Functionally, molecular chaperone. Has ATPase activity. The polypeptide is Chaperone protein HtpG (Dechloromonas aromatica (strain RCB)).